A 92-amino-acid chain; its full sequence is Small ribosomal subunit protein uS19 (92 aa).

The protein belongs to the universal ribosomal protein uS19 family.

Functionally, protein S19 forms a complex with S13 that binds strongly to the 16S ribosomal RNA. This is Small ribosomal subunit protein uS19 from Acidovorax sp. (strain JS42).